The following is a 595-amino-acid chain: Probable hydrolase M10 (595 aa).

Residues 1–23 (MRFTSTILLRVAVLLSLGGGSQT) form the signal peptide. 6 N-linked (GlcNAc...) asparagine glycosylation sites follow: asparagine 59, asparagine 87, asparagine 266, asparagine 436, asparagine 457, and asparagine 561.

Belongs to the beta-lactamase family.

It functions in the pathway secondary metabolite biosynthesis. Probable hydrolase; part of the gene cluster that mediates the biosynthesis of squalestatin S1 (SQS1, also known as zaragozic acid A), a heavily oxidized fungal polyketide that offers potent cholesterol lowering activity by targeting squalene synthase (SS). SQS1 is composed of a 2,8-dioxobicyclic[3.2.1]octane-3,4,5-tricarboxyclic acid core that is connected to two lipophilic polyketide arms. These initial steps feature the priming of an unusual benzoic acid starter unit onto the highly reducing polyketide synthase pks2, followed by oxaloacetate extension and product release to generate a tricarboxylic acid containing product. The phenylalanine ammonia lyase (PAL) M7 and the acyl-CoA ligase M9 are involved in transforming phenylalanine into benzoyl-CoA. The citrate synthase-like protein R3 is involved in connecting the C-alpha-carbons of the hexaketide chain and oxaloacetate to afford the tricarboxylic acid unit. The potential hydrolytic enzymes, M8 and M10, are in close proximity to pks2 and may participate in product release. On the other side, the tetraketide arm is synthesized by a the squalestatin tetraketide synthase pks1 and enzymatically esterified to the core in the last biosynthetic step, by the acetyltransferase M4. The biosynthesis of the tetraketide must involve 3 rounds of chain extension. After the first and second rounds methyl-transfer occurs, and in all rounds of extension the ketoreductase and dehydratase are active. The enoyl reductase and C-MeT of pks1 are not active in the final round of extension. The acetyltransferase M4 appears to have a broad substrate selectivity for its acyl CoA substrate, allowing the in vitro synthesis of novel squalestatins. The biosynthesis of SQS1 requires several oxidative steps likely performed by oxidoreductases M1, R1 and R2. Finally, in support of the identification of the cluster as being responsible for SQS1 production, the cluster contains a gene encoding a putative squalene synthase (SS) R6, suggesting a likely mechanism for self-resistance. The sequence is that of Probable hydrolase M10 from Phoma sp. (strain ATCC 20986 / MF5453).